The primary structure comprises 227 residues: Protein CAP22 (227 aa).

Residues N55 and N72 are each glycosylated (N-linked (GlcNAc...) asparagine). Positions 143–162 are disordered; that stretch reads TTIGGGATPAPTSERSRTSD.

The protein resides in the secreted. It is found in the cell wall. The chain is Protein CAP22 (CAP22) from Colletotrichum gloeosporioides (Anthracnose fungus).